Reading from the N-terminus, the 369-residue chain is Glycolate oxidase (369 aa).

Met1 carries the post-translational modification N-acetylmethionine. Positions 1–359 (MEITNVNEYE…SRSHIAADWD (359 aa)) constitute an FMN hydroxy acid dehydrogenase domain. Tyr24 is a glyoxylate binding site. FMN is bound by residues 77–79 (PTA), Ser106, 127–129 (QLY), and Thr155. Glyoxylate is bound at residue Tyr129. Arg164 is a glyoxylate binding site. Lys230 and Ser252 together coordinate FMN. The glyoxylate site is built by His254 and Arg257. Catalysis depends on His254, which acts as the Proton acceptor. Residues 285–289 (DGGVR) and 308–309 (GR) each bind FMN. Residues 367-369 (ARL) carry the Microbody targeting signal motif.

Belongs to the FMN-dependent alpha-hydroxy acid dehydrogenase family. As to quaternary structure, homotetramer. Requires FMN as cofactor.

The protein localises to the peroxisome. The catalysed reaction is glycolate + O2 = glyoxylate + H2O2. It carries out the reaction a (2S)-2-hydroxycarboxylate + O2 = a 2-oxocarboxylate + H2O2. The protein operates within photosynthesis; photorespiration; glycine from 2-phosphoglycolate: step 2/3. In terms of biological role, catalyzes the oxidation of glycolate to glyoxylate, with a reduction of O2 to H2O2. Is a key enzyme in photorespiration in green plants. To a lesser extent, is also able to use L-lactate and 2-hydroxbyutanoate as substrate in vitro, but shows almost no activity with L-mandelate. In Spinacia oleracea (Spinach), this protein is Glycolate oxidase.